The primary structure comprises 388 residues: Chorismate synthase (388 aa).

NADP(+)-binding residues include arginine 40 and arginine 46. FMN is bound by residues 131-133 (RSS), 252-253 (NA), glycine 296, 311-315 (KPIPT), and arginine 337.

The protein belongs to the chorismate synthase family. Homotetramer. It depends on FMNH2 as a cofactor.

It catalyses the reaction 5-O-(1-carboxyvinyl)-3-phosphoshikimate = chorismate + phosphate. Its pathway is metabolic intermediate biosynthesis; chorismate biosynthesis; chorismate from D-erythrose 4-phosphate and phosphoenolpyruvate: step 7/7. Its function is as follows. Catalyzes the anti-1,4-elimination of the C-3 phosphate and the C-6 proR hydrogen from 5-enolpyruvylshikimate-3-phosphate (EPSP) to yield chorismate, which is the branch point compound that serves as the starting substrate for the three terminal pathways of aromatic amino acid biosynthesis. This reaction introduces a second double bond into the aromatic ring system. This is Chorismate synthase from Limosilactobacillus fermentum (strain NBRC 3956 / LMG 18251) (Lactobacillus fermentum).